The primary structure comprises 854 residues: Alkaline phosphatase-like protein PglZ (854 aa).

This sequence belongs to the alkaline phosphatase superfamily.

Functionally, BREX systems (bacteriophage exclusion) provide immunity against bacteriophage. A core protein of a type 1 BREX system. This system allows phage adsorption but prevents phage DNA replication, without degradation of the phage DNA. Methylation of bacterial DNA by PglX probably guides self/non-self discrimination. When the brxA-brxB-brxC-pglX and pglZ-brxL operons are transformed into a susceptible B.subtilis strain (BEST7003) they confer resistance to bacteriophages SPbeta, SP16, Zeta, phi3T and SP02 and partial protection to phages SP01 and SP82G (these include lytic and temperate phage). They do not protect against phages phi105, rho10 or rho14. Additionally confers a very slight reduction in efficiency of plasmid transformation. The polypeptide is Alkaline phosphatase-like protein PglZ (Bacillus cereus (strain H3081.97)).